We begin with the raw amino-acid sequence, 207 residues long: Large ribosomal subunit protein bL25 (207 aa).

The protein belongs to the bacterial ribosomal protein bL25 family. CTC subfamily. As to quaternary structure, part of the 50S ribosomal subunit; part of the 5S rRNA/L5/L18/L25 subcomplex. Contacts the 5S rRNA. Binds to the 5S rRNA independently of L5 and L18.

This is one of the proteins that binds to the 5S RNA in the ribosome where it forms part of the central protuberance. The polypeptide is Large ribosomal subunit protein bL25 (Brucella canis (strain ATCC 23365 / NCTC 10854 / RM-666)).